Reading from the N-terminus, the 325-residue chain is Glutarate 2-hydroxylase (325 aa).

His-160, Asp-162, and His-292 together coordinate Fe cation.

The protein belongs to the glutarate hydroxylase family. As to quaternary structure, homotetramer. Fe(2+) serves as cofactor.

The catalysed reaction is glutarate + 2-oxoglutarate + O2 = (S)-2-hydroxyglutarate + succinate + CO2. The protein operates within amino-acid degradation. Acts as an alpha-ketoglutarate-dependent dioxygenase catalyzing hydroxylation of glutarate (GA) to L-2-hydroxyglutarate (L2HG). Functions in a L-lysine degradation pathway that proceeds via cadaverine, glutarate and L-2-hydroxyglutarate. The protein is Glutarate 2-hydroxylase of Escherichia coli O157:H7.